The following is a 238-amino-acid chain: Aliphatic sulfonates import ATP-binding protein SsuB (238 aa).

Residues 7 to 221 (VSLHQVHQQF…RPGDAAFASL (215 aa)) enclose the ABC transporter domain. Residue 39–46 (GRSGSGKT) coordinates ATP.

It belongs to the ABC transporter superfamily. Aliphatic sulfonates importer (TC 3.A.1.17.2) family. The complex is composed of two ATP-binding proteins (SsuB), two transmembrane proteins (SsuC) and a solute-binding protein (SsuA).

It is found in the cell inner membrane. The enzyme catalyses ATP + H2O + aliphatic sulfonate-[sulfonate-binding protein]Side 1 = ADP + phosphate + aliphatic sulfonateSide 2 + [sulfonate-binding protein]Side 1.. In terms of biological role, part of the ABC transporter complex SsuABC involved in aliphatic sulfonates import. Responsible for energy coupling to the transport system. In Granulibacter bethesdensis (strain ATCC BAA-1260 / CGDNIH1), this protein is Aliphatic sulfonates import ATP-binding protein SsuB.